The sequence spans 241 residues: Tetraspanin-1 (241 aa).

Transmembrane regions (helical) follow at residues 12-32 (ILFN…GIWV), 53-73 (FVNV…LGFL), and 89-109 (FFSI…VALV). Asn154 carries an N-linked (GlcNAc...) asparagine glycan. The chain crosses the membrane as a helical span at residues 212 to 232 (AVTVGGVAVGVAALELAAMVV).

This sequence belongs to the tetraspanin (TM4SF) family. In terms of assembly, interacts with SLC19A2. Interacts with NTRK1/TRKA.

The protein resides in the cell membrane. Its subcellular location is the lysosome membrane. In terms of biological role, structural component of specialized membrane microdomains known as tetraspanin-enriched microdomains (TERMs), which act as platforms for receptor clustering and signaling. Participates thereby in diverse biological functions such as cell signal transduction, adhesion, migration and protein trafficking. Regulates neuronal differentiation in response to NGF by facilitating NGF-mediated activation of NTRK1/TRKA receptor tyrosine kinase and subsequent downstream signaling pathways. Plays a role in the inhibition of TNFalpha-induced apoptosis. Mechanistically, inhibits the NF-kappa-B signaling pathway by blocking phosphorylation of CHUK. Also promotes the stability of the thiamine transporter 1/SLC19A2 in intestinal epithelial cells leading to an increase of thiamine uptake process. In Rattus norvegicus (Rat), this protein is Tetraspanin-1 (Tspan1).